A 66-amino-acid polypeptide reads, in one-letter code: UPF0370 protein YpfN (66 aa).

The chain crosses the membrane as a helical span at residues 4-24 (LAKYWWILVLVFLVGVLLNVI). The interval 39–66 (KPELPPHRDFNDKWDDEEDWPKKDQPKK) is disordered. Positions 42–51 (LPPHRDFNDK) are enriched in basic and acidic residues.

The protein belongs to the UPF0370 family.

Its subcellular location is the cell membrane. The chain is UPF0370 protein YpfN from Salmonella paratyphi A (strain AKU_12601).